Consider the following 545-residue polypeptide: E3 ubiquitin-protein ligase ipaH9.8 (545 aa).

Residues 1–242 (MLPINNNFSL…YHGPRIYFSM (242 aa)) form an interaction with target proteins region. LRR repeat units follow at residues 57 to 77 (NSDE…NLPA), 78 to 99 (QITL…PVTL), 100 to 117 (KKLY…VLPP), 118 to 139 (ALES…PDSL), 140 to 157 (LTMN…SLPL), 158 to 179 (ALKN…SEGN), 182 to 203 (VVRE…ILNL), and 205 to 228 (NECS…QRLT). The tract at residues 243–250 (SDGQQNTL) is linker. The interval 251-545 (HRPLADAVTA…SENGSQLHHS (295 aa)) is E3 ubiquitin-protein ligase catalytic domain. The NEL domain occupies 253–545 (PLADAVTAWF…SENGSQLHHS (293 aa)). Residue cysteine 337 is the Glycyl thioester intermediate of the active site.

The protein belongs to the LRR-containing bacterial E3 ligase family. Also interacts with human and mouse U2AF1 (U2AF35). In terms of processing, ubiquitinated in the presence of host E1 ubiquitin-activating enzyme, E2 ubiquitin-conjugating enzyme and ubiquitin.

The protein localises to the secreted. The protein resides in the host cytoplasm. Its subcellular location is the host nucleus. The enzyme catalyses S-ubiquitinyl-[E2 ubiquitin-conjugating enzyme]-L-cysteine + [acceptor protein]-L-lysine = [E2 ubiquitin-conjugating enzyme]-L-cysteine + N(6)-ubiquitinyl-[acceptor protein]-L-lysine.. Exists in an autoinhibited state in the absence of substrate protein, due to interactions of the leucine-rich repeats with NEL domain. Is activated upon binding to a substrate protein. Its function is as follows. Effector E3 ubiquitin ligase that interferes with host's ubiquitination pathway and modulates the acute inflammatory responses, thus facilitating bacterial colonization within the host cell. Interacts with IKBKG (NEMO) and TNIP1 (ABIN-1), a ubiquitin-binding adapter protein, which results in TNIP1-dependent 'Lys-27'-linked polyubiquitination of IKBKG. Consequently, polyubiquitinated IKBKG undergoes proteasome-dependent degradation, which perturbs NF-kappa-B activation during bacterial infection. Mediates polyubiquitination of host U2AF1, leading to its proteasomal degradation. Catalyzes 'Lys-48'-linked polyubiquitination and subsequent degradation of a subset of host guanylate-binding proteins (GBP1, GBP2, GBP4 and GBP6), thereby suppressing host cell defense. In contrast, host GBP3 and GBP7 are not ubiquitinated by IpaH9.8. Uses UBE2D2 (UBCH5B) as an E2 ubiquitin-conjugating enzyme. The protein is E3 ubiquitin-protein ligase ipaH9.8 (ipaH9.8) of Shigella boydii serotype 4 (strain Sb227).